Consider the following 523-residue polypeptide: Calcium-dependent protein kinase 1 (523 aa).

The disordered stretch occupies residues 1 to 36 (MGCNQSKSANDVRGNKVNHVNSKKKNNKREDTNDGE). G2 carries the N-myristoyl glycine lipid modification. C3 is lipidated: S-palmitoyl cysteine. The Protein kinase domain occupies 57 to 324 (YFKVRKLGSG…AEEALNSRWI (268 aa)). Residues 63 to 71 (LGSGAYGEV), K86, and K90 contribute to the ATP site. S65 carries the post-translational modification Phosphoserine. S117 carries the phosphoserine modification. Catalysis depends on D190, which acts as the Proton acceptor. Phosphoserine is present on residues S216 and S219. T230 bears the Phosphothreonine mark. At S334 the chain carries Phosphoserine. Residues 345–352 (NMRKFEGS) carry the J domain autoinhibitory motif motif. The segment at 345–363 (NMRKFEGSQKLAQAAILFI) is j domain. The J domain interacts with the EF-hand domains motif lies at 353–363 (QKLAQAAILFI). EF-hand domains follow at residues 371 to 406 (EERK…LRNF), 415 to 450 (NVEE…KQIL), 451 to 486 (FSEE…TSIS), and 487 to 520 (EKTW…ICDH). 20 residues coordinate Ca(2+): D384, N386, D388, Q390, E395, D428, D430, N432, Y434, E439, D464, D466, S468, K470, E475, D498, N500, D502, M504, and E509.

This sequence belongs to the protein kinase superfamily. Ser/Thr protein kinase family. CDPK subfamily. Monomer. The cofactor is Mg(2+). In terms of processing, myristoylated. Myristoylation and palmitoylation are required for the localization to the parasitophorous vacuole membrane. Palmitoylated. Palmitoylation increases in merozoites in response to low level of extracellular K(+) in the host blood. Myristoylation and palmitoylation are required for the localization to the parasitophorous vacuole membrane. Post-translationally, phosphorylation at Thr-230 may regulate CDPK1 kinase activity. Phosphorylation increases in response to an increase in intracellular Ca(2+) levels. Autophosphorylated in vitro. Autophosphorylation does not affect membrane localization in vitro.

It is found in the membrane. The protein resides in the cell membrane. The protein localises to the parasitophorous vacuole membrane. Its subcellular location is the cytoplasm. It localises to the cell projection. It is found in the cilium. The protein resides in the flagellum. The protein localises to the host cell membrane. It carries out the reaction L-seryl-[protein] + ATP = O-phospho-L-seryl-[protein] + ADP + H(+). The catalysed reaction is L-threonyl-[protein] + ATP = O-phospho-L-threonyl-[protein] + ADP + H(+). With respect to regulation, activated by calcium. Upon calcium binding to the EF-hand domains, the C-terminus of the junction domain (J domain) undergoes a conformational change which results in the dissociation of the pseudo-substrate inhibitory motif from the catalytic domain. This, in turn may facilitate the autophosphorylation of the activation loop at Thr-230, which leads to the kinase activation. Functionally, calcium-dependent protein kinase which acts as a sensor and effector of intracellular Ca(2+) levels probably in part downstream of cGMP-activated PKG kinase. During the liver stage, involved in sporozoite motility and thus in sporozoite invasion of host hepatocytes, probably together with CDPK4 and CDPK5. In the mosquito midgut and during the last stage of male gamete exflagellation, may play a role in the rupture of the host erythrocyte membrane. In the mosquito midgut, required for the differentiation of the zygote into the ookinete by promoting the translational activation of a subset of repressed mRNAs; these mRNAs are kept repressed in the zygote by the DOZI- or CITH-containing mRNP complexes. Dispensable during the asexual blood stage. The protein is Calcium-dependent protein kinase 1 of Plasmodium berghei (strain Anka).